The primary structure comprises 329 residues: Putative glucose-6-phosphate 1-epimerase (329 aa).

The segment covering 1–13 has biased composition (low complexity); it reads MAAPAPAGAAASP. Residues 1–20 are disordered; that stretch reads MAAPAPAGAAASPSPKPQLP. Residues R82, Q100, and R105 each coordinate substrate. H183 is an active-site residue. D228 lines the substrate pocket. E287 is an active-site residue.

This sequence belongs to the glucose-6-phosphate 1-epimerase family.

The enzyme catalyses alpha-D-glucose 6-phosphate = beta-D-glucose 6-phosphate. The protein is Putative glucose-6-phosphate 1-epimerase of Cenchrus ciliaris (Buffelgrass).